The following is a 286-amino-acid chain: Isopentenyl-diphosphate Delta-isomerase II (286 aa).

A Nudix hydrolase domain is found at 104–256; that stretch reads MLHRAFSVFL…GLKLSPWFRL (153 aa). Active-site residues include Cys141 and Glu203.

It belongs to the IPP isomerase type 1 family.

The enzyme catalyses isopentenyl diphosphate = dimethylallyl diphosphate. Its pathway is isoprenoid biosynthesis; dimethylallyl diphosphate biosynthesis; dimethylallyl diphosphate from isopentenyl diphosphate: step 1/1. The protein operates within porphyrin-containing compound metabolism; chlorophyll biosynthesis. In terms of biological role, catalyzes the 1,3-allylic rearrangement of the homoallylic substrate isopentenyl (IPP) to its highly electrophilic allylic isomer, dimethylallyl diphosphate (DMAPP). The protein is Isopentenyl-diphosphate Delta-isomerase II (IPI2) of Clarkia breweri (Fairy fans).